Here is a 446-residue protein sequence, read N- to C-terminus: MEKDKHSHFYNQKSDFRIEHSMLEELENKLIHSRKTERAKIQQQLAKIHNNVKKLQHQLKDVKPTPDFVEKLREMMEEIENAINTFKEEQRLIYEELIKEEKTTNNELSAISRKIDTWALGNSETEKAFRAISSKVPVDKVTPSTLPEEVLDFEKFLQQTGGRQGAWDDYDHQNFVKVRNKHKGKPTFMEEVLEHLPGKTQDEVQQHEKWYQKFLALEERKKESIQIWKTKKQQKREEIFKLKEKADNTPVLFHNKQEDNQKQKEEQRKKQKLAVEAWKKQKSIEMSMKCASQLKEEEEKEKKHQKERQRQFKLKLLLESYTQQKKEQEEFLRLEKEIREKAEKAEKRKNAADEISRFQERDLHKLELKILDRQAKEDEKSQKQRRLAKLKEKVENNVSRDPSRLYKPTKGWEERTKKIGPTGSGPLLHIPHRAIPTWRQGIQRRV.

Coiled coils occupy residues Lys-35–Asp-116 and Glu-219–Arg-400. Disordered regions lie at residues Phe-253 to Lys-272 and Leu-390 to Ile-430. Over residues Asn-255–Arg-268 the composition is skewed to basic and acidic residues.

Its subcellular location is the cytoplasm. It localises to the cytoskeleton. It is found in the microtubule organizing center. The protein resides in the centrosome. The protein localises to the centriolar satellite. In Homo sapiens (Human), this protein is Coiled-coil domain-containing protein 112 (CCDC112).